We begin with the raw amino-acid sequence, 805 residues long: Replication restart protein PriA (805 aa).

The segment at 1 to 110 (MNFAEVIVDV…QAMLPAALKA (110 aa)) is 3'BD. The tract at residues 111 to 166 (KYEKELKIAHGADLPPQVERLFSETKTLLYSDIPDHETLKLIQRHVQKGDIDVTYK) is linker. The tract at residues 167–253 (VAQKTNKKMV…KESYEEVYRD (87 aa)) is WH. The region spanning 282–448 (TLDSDEHKVF…QKGVYELLSL (167 aa)) is the Helicase ATP-binding domain. Residue 295-302 (GVTGSGKT) coordinates ATP. The DEAH box motif lies at 391–394 (DEEH). Residues Cys510, Cys513, Cys519, Cys522, Cys537, Cys540, Cys550, and Cys553 each contribute to the Zn(2+) site. In terms of domain architecture, Helicase C-terminal spans 545 to 699 (PVPHTCPECA…TFYQHEMAHR (155 aa)).

The protein belongs to the helicase family. PriA subfamily. In terms of assembly, monomer. Component of the replication restart primosome which assembles in this order; PriA, DnaD then DnaB. The preferred DNA substrate mimics an arrested DNA replication fork with unreplicated lagging strand. Interacts with DnaD but not DnaB. Interacts with SSB (sbbA) via the latter's 35 residue C-terminal tail which tethers PriA to ssDNA. Colocalizes with DNA pol III subunit gamma/tau (dnaX). May interact with RarA. Requires Zn(2+) as cofactor.

Its subcellular location is the cytoplasm. The protein resides in the nucleoid. It catalyses the reaction Couples ATP hydrolysis with the unwinding of duplex DNA by translocating in the 3'-5' direction.. The catalysed reaction is ATP + H2O = ADP + phosphate + H(+). In terms of biological role, initiates the restart of stalled replication forks, which reloads the replicative helicase on sites other than the origin of replication. Recognizes and binds to abandoned replication forks and remodels them to uncover a helicase loading site. Promotes assembly of the primosome at these replication forks. Serves as the initiating protein for assembly of the replication restart primosome; binding of PriA to an arrested DNA replication fork with unreplicated lagging strand triggers assembly. Sequentially DnaD (possibly as a dimer) and DnaB homotetramers bind. Assembly probably continues by loading of the DnaC replicative helicase aided by helicase loader DnaI. A single-strand (ss)DNA-dependent ATPase with helicase activity. Recognizes and binds the arrested nascent DNA chain at stalled replication forks. Binds forked DNA substrates and makes a larger complex with RarA; RarA has no effect on the helicase function. Binds ssDNA, D-loops and replication fork-like substrates but not double-stranded (ds)DNA; the preferred DNA substrate mimics an arrested DNA replication fork with an unreplicated lagging strand. Recognizes nicked dsDNA. A supershift on ssDNA occurs in the presence of single-stranded binding protein (SSB). Cannot substitute for E.coli PriA. Its function is as follows. Required for replication of plasmids that have a rolling circle mechanism, which produces circular single-stranded (ss)DNA intermediates corresponding to the lagging strand template, which are then converted into double-stranded (ds)DNA; priA is required to activate the conversion of ssDNA into dsDNA. In Bacillus subtilis (strain 168), this protein is Replication restart protein PriA.